The sequence spans 471 residues: MLGILLQKATATLASGLNSSRAGMFPIALGLLLQLFFDHALAESTFLDKAFSLQAALLPMEHKKRSVNKCCLLTPPPPPMFPPPFFTETNILQEVDLNNLPLEIKPTEPSCKITCIIGPPGPSGPQGPQGIQGIMGPKGEIGEIGRPGRKGRPGVRGPRGMPGSPCSPGPIGPRGEKGDIGLTGLPGARGPMGPKGLTGQKGEKGIIGEKGQQGIKGEMGVMGLPGMLGQKGEMGPKGVSGAPGHRGPVGRPGKRGKTGLKGDIGPPGIMGPSGPPGPSGLPVMSGSGHLMVGPKGERGLPGPVGRCDCNLPQTVVNPSYNKFPTLINPPQVPAIFVVDSEDELEKLNTENALAFRKDQKSLYYRDTVGWLPIQIAPIQQMRQNPTGFCGDEIVQVENGEECDDGNRIVTDSCINCKQAYCGDGYLQSGLEECDGKDFGYHTCKSYLPGSYGELKCTSYCYIDSTGCRYFT.

A signal peptide spans 1–30 (MLGILLQKATATLASGLNSSRAGMFPIALG). Positions 70–86 (CCLLTPPPPPMFPPPFF) are PRAD. Collagen-like domains lie at 118–282 (GPPG…SGLP) and 293–307 (GPKGERGLPGPVGRC). Disordered stretches follow at residues 140-205 (EIGE…GEKG) and 237-267 (KGVSGAPGHRGPVGRPGKRGKTGLKGDIGPP). 2 stretches are compositionally biased toward low complexity: residues 155–164 (VRGPRGMPGS) and 242–251 (APGHRGPVGR). Repeat copies occupy residues 388 to 413 (FCGDEIVQVENGEECDDGNRIVTDSC) and 420 to 443 (YCGDGYLQSGLEECDGKDFGYHTC). The segment at 388–443 (FCGDEIVQVENGEECDDGNRIVTDSCINCKQAYCGDGYLQSGLEECDGKDFGYHTC) is 2 X 26 AA approximate repeats.

This sequence belongs to the COLQ family. The asymmetric form of AChE is a disulfide-bonded oligomer composed of a collagenic subunit (Q) and a variable number of asymmetric (T) catalytic subunits. The N-terminal of the collagenic subunit (Q) associates with the C-terminal of the catalytic subunit (T). Expressed in electric organs but not in muscle.

The protein resides in the synapse. In terms of biological role, anchors the catalytic subunits of asymmetric AChE to the synaptic basal lamina. This Torpedo marmorata (Marbled electric ray) protein is Acetylcholinesterase collagenic tail peptide.